Reading from the N-terminus, the 443-residue chain is Phosphoglucosamine mutase (443 aa).

S102 acts as the Phosphoserine intermediate in catalysis. Positions 102, 241, 243, and 245 each coordinate Mg(2+). S102 is modified (phosphoserine).

The protein belongs to the phosphohexose mutase family. Mg(2+) serves as cofactor. Activated by phosphorylation.

The enzyme catalyses alpha-D-glucosamine 1-phosphate = D-glucosamine 6-phosphate. In terms of biological role, catalyzes the conversion of glucosamine-6-phosphate to glucosamine-1-phosphate. The polypeptide is Phosphoglucosamine mutase (Polaromonas sp. (strain JS666 / ATCC BAA-500)).